Reading from the N-terminus, the 604-residue chain is Lipoma-preferred partner homolog (604 aa).

2 disordered regions span residues 31–96 and 129–381; these read TPSI…LDDV and DLES…AFRP. Residues 32-41 are compositionally biased toward polar residues; that stretch reads PSISVSTQQT. Composition is skewed to low complexity over residues 42–53 and 143–161; these read PKKFAPVVAPKP and GSGT…TPVT. Over residues 207–226 the composition is skewed to polar residues; it reads SYTTASTPSRPTFNVQVRTA. A compositionally biased stretch (low complexity) spans 365-377; that stretch reads SGYPSSGPTSSTP. LIM zinc-binding domains are found at residues 406–465, 466–526, and 527–595; these read GRCA…INTL, EQCS…KFAP, and RCSV…RIQA.

It belongs to the zyxin/ajuba family.

The protein localises to the nucleus. It localises to the cytoplasm. Its subcellular location is the cell junction. May play a structural role at sites of cell adhesion in maintaining cell shape and motility. May be involved in signal transduction from cell adhesion sites to the nucleus. This chain is Lipoma-preferred partner homolog (LPP), found in Gallus gallus (Chicken).